A 217-amino-acid polypeptide reads, in one-letter code: Thiopurine S-methyltransferase (217 aa).

S-adenosyl-L-methionine contacts are provided by tryptophan 11, leucine 46, glutamate 67, and arginine 122.

The protein belongs to the class I-like SAM-binding methyltransferase superfamily. TPMT family.

Its subcellular location is the cytoplasm. The enzyme catalyses S-adenosyl-L-methionine + a thiopurine = S-adenosyl-L-homocysteine + a thiopurine S-methylether.. This is Thiopurine S-methyltransferase from Vibrio vulnificus (strain YJ016).